We begin with the raw amino-acid sequence, 258 residues long: Protein T1 (258 aa).

The signal sequence occupies residues 1 to 17 (MRRLCIILLVYVYATFA). N-linked (GlcNAc...) asparagine; by host glycans are attached at residues asparagine 67, asparagine 151, and asparagine 172.

Belongs to the poxviruses A41 family.

The chain is Protein T1 from Rabbit fibroma virus (strain Kasza) (RFV).